The primary structure comprises 293 residues: Elongation factor Ts (293 aa).

The interval 80-83 (TDFV) is involved in Mg(2+) ion dislocation from EF-Tu.

This sequence belongs to the EF-Ts family.

It is found in the cytoplasm. In terms of biological role, associates with the EF-Tu.GDP complex and induces the exchange of GDP to GTP. It remains bound to the aminoacyl-tRNA.EF-Tu.GTP complex up to the GTP hydrolysis stage on the ribosome. The polypeptide is Elongation factor Ts (Burkholderia ambifaria (strain MC40-6)).